Here is a 380-residue protein sequence, read N- to C-terminus: MRMQTKLIHGGISEDATTGAVSVPIYQTSTYRQDAIGRHKGYEYSRSGNPTRFALEELIADLEGGVKGFAFASGLAGIHAVFSLLQSGDHVLLGDDVYGGTFRLFNQVLVKNGLSCTIIDTSDISQIKKAIKPNTKALYLETPSNPLLKITDLAQCASVAKDHGLLTIVDNTFATPYYQNPLLLGADIVAHSGTKYLGGHSDVVAGLVTTNNEALAQEIAFFQNAIGGVLGPQDSWLLQRGIKTLGLRMEAHQKNALCVAEFLEKHPKVERVYYPGLPTHPNYELAKKQMRGFSGMLSFTLKNDSEAVAFVESLKLFILGESLGGVESLVGIPAFMTHACIPKTQREAAGIRDGLVRLSVGIEHEQDLLEDLEQAFAKIG.

The residue at position 195 (Lys-195) is an N6-(pyridoxal phosphate)lysine.

It belongs to the trans-sulfuration enzymes family. In terms of assembly, homotetramer. Pyridoxal 5'-phosphate serves as cofactor.

The protein resides in the cytoplasm. The catalysed reaction is O-succinyl-L-homoserine + L-cysteine = L,L-cystathionine + succinate + H(+). Functionally, catalyzes the formation of L-cystathionine from O-succinyl-L-homoserine (OSHS) and L-cysteine, via a gamma-replacement reaction. In the absence of thiol, catalyzes gamma-elimination to form 2-oxobutanoate, succinate and ammonia. This is Cystathionine gamma-synthase (metB) from Helicobacter pylori (strain ATCC 700392 / 26695) (Campylobacter pylori).